The chain runs to 466 residues: Fumarate hydratase class II (466 aa).

Substrate-binding positions include 100 to 102 (SGT), R128, 131 to 134 (HPND), 141 to 143 (SSN), and T189. Basic and acidic residues predominate over residues 122–137 (GERGERRKVHPNDDVN). Residues 122 to 143 (GERGERRKVHPNDDVNKGQSSN) are disordered. Residue H190 is the Proton donor/acceptor of the active site. Residue S320 is part of the active site. Substrate-binding positions include S321 and 326–328 (KVN).

This sequence belongs to the class-II fumarase/aspartase family. Fumarase subfamily. As to quaternary structure, homotetramer.

It localises to the cytoplasm. The catalysed reaction is (S)-malate = fumarate + H2O. The protein operates within carbohydrate metabolism; tricarboxylic acid cycle; (S)-malate from fumarate: step 1/1. Its function is as follows. Involved in the TCA cycle. Catalyzes the stereospecific interconversion of fumarate to L-malate. The protein is Fumarate hydratase class II of Myxococcus xanthus (strain DK1622).